The chain runs to 479 residues: Transcription factor CP2-like protein 1 (479 aa).

The interval methionine 1–cysteine 52 is mediate transcriptional repression. A Grh/CP2 DB domain is found at arginine 43 to asparagine 280. 2 disordered regions span residues lysine 219–serine 248 and tryptophan 260–glycine 301. Positions lysine 221–tyrosine 245 are enriched in basic and acidic residues. The interval proline 261–arginine 365 is SAM2-like domain. Residues glutamine 266–asparagine 292 are compositionally biased toward polar residues.

The protein belongs to the grh/CP2 family. CP2 subfamily. Forms homohexamers via its SAM-like domain. Interacts with Mta1; which is indispensable for Tfcp2l1-mediated self-renewal-promoting effect and endoderm-inhibiting action. Highly expressed in placenta, testis, small intestine, kidney and stomach. Low levels of expression in lung, mesenteric lymph nodes, muscle, ovary, and thymus. No expression was detected in brain, heart, liver, and spleen. Expressed in eccrine glands in the palm. Expression is prominent in both kidney collecting ducts intercalated (IC) and principal (PC) cells. Also expressed in the thick limb of Henle and connecting segments of the nephron.

The protein resides in the nucleus. Transcription factor that facilitates establishment and maintenance of pluripotency in embryonic stem cells (ESCs). With Klf2, acts as the major effector of self-renewal that mediates induction of pluripotency downstream of LIF/Stat3 and Wnt/beta-catenin signaling. Required for normal duct development in the salivary gland and kidney. Coordinates the development of the kidney collecting ducts intercalated (IC) and principal (PC) cells, which regulate acid-base and salt-water homeostasis, respectively. Regulates the expression of IC genes including subunits B1 and D2 of the V-ATPase complex, Oxgr1, Ca12, Slc4a1, Aqp6 and IC-specific transcription factor Foxi1. Also regulates the expression of Jag1 and subsequent notch signaling in the collecting duct. Jag1 initiates notch signaling in PCs but inhibits notch signaling in ICs. Acts as a transcriptional suppressor that may suppress UBP1-mediated transcriptional activation. Modulates the placental expression of CYP11A1. The sequence is that of Transcription factor CP2-like protein 1 (Tfcp2l1) from Mus musculus (Mouse).